The chain runs to 167 residues: Translationally-controlled tumor protein homolog (167 aa).

The TCTP domain occupies 1-167; that stretch reads MKLFTDIISN…WKDGLRETKI (167 aa).

Belongs to the TCTP family.

The protein resides in the cytoplasm. It localises to the cytoskeleton. Its function is as follows. Involved in protein synthesis. Involved in microtubule stabilization. The chain is Translationally-controlled tumor protein homolog from Mycosarcoma maydis (Corn smut fungus).